Here is a 291-residue protein sequence, read N- to C-terminus: Small ribosomal subunit protein uS2 (291 aa).

A compositionally biased stretch (acidic residues) spans 238–247; the sequence is DEESGDELDE. A disordered region spans residues 238-291; it reads DEESGDELDESVSLHEEGREITDYENYTPPEEREYSVNDEGDVFDEDESLYEGR. Basic and acidic residues predominate over residues 249-259; it reads VSLHEEGREIT. A compositionally biased stretch (acidic residues) spans 274–291; sequence VNDEGDVFDEDESLYEGR.

It belongs to the universal ribosomal protein uS2 family.

This Treponema pallidum (strain Nichols) protein is Small ribosomal subunit protein uS2 (rpsB).